Consider the following 737-residue polypeptide: Glycogen [starch] synthase, muscle (737 aa).

Position 8 is a phosphoserine; by AMPK and PKA (serine 8). Residue serine 11 is modified to Phosphoserine. Lysine 39 is a binding site for UDP. UDP-alpha-D-glucose-binding residues include histidine 205 and arginine 211. Residues histidine 291, glutamate 292, glutamine 294, histidine 297, and lysine 301 each coordinate alpha-D-glucose 6-phosphate. Residue arginine 331 participates in UDP binding. Arginine 331 is a binding site for UDP-alpha-D-glucose. Serine 412 is subject to Phosphoserine. Histidine 501 serves as a coordination point for alpha-D-glucose 6-phosphate. Glutamate 510, tryptophan 512, and glycine 513 together coordinate UDP-alpha-D-glucose. Threonine 515 contributes to the UDP binding site. Alpha-D-glucose 6-phosphate is bound by residues arginine 582 and arginine 586. Residues tyrosine 634–asparagine 737 form a disordered region. Residues serine 641, serine 645, serine 649, and serine 652 each carry the phosphoserine modification. Serine 653 is subject to Phosphoserine; by GSK3-alpha and GSK3-beta. Residue serine 657 is modified to Phosphoserine; by CK2. Residues glutamate 658–alanine 681 show a composition bias toward acidic residues. Residues alanine 682–arginine 695 are compositionally biased toward basic and acidic residues. Serine 698 carries the post-translational modification Phosphoserine. Residues serine 698 to alanine 714 are compositionally biased toward polar residues. Threonine 700 is subject to Phosphothreonine. A Phosphoserine modification is found at serine 710. Residues threonine 715–asparagine 737 show a composition bias toward low complexity. Residue threonine 721 is modified to Phosphothreonine. A phosphoserine mark is found at serine 727 and serine 731.

Belongs to the glycosyltransferase 3 family. Part of the GYS1-GYG1 complex, a heterooctamer composed of a tetramer of GYS1 and 2 dimers of GYG1, where each GYS1 protomer binds to one GYG1 subunit (via GYG1 C-terminus); the GYS1 tetramer may dissociate from GYG1 dimers to continue glycogen polymerization on its own. Phosphorylation at Ser-8 by AMPK inactivates the enzyme activity. Primed phosphorylation at Ser-657 (site 5) by CSNK2A1 and CSNK2A2 is required for inhibitory phosphorylation at Ser-641 (site 3a), Ser-645 (site 3b), Ser-649 (site 3c) and Ser-653 (site 4) by GSK3A an GSK3B. Phosphorylated at Ser-641 by DYRK2, leading to inactivation. Phosphorylated at Ser-641 by PASK, leading to inactivation; phosphorylation by PASK is inhibited by glycogen. Dephosphorylation at Ser-641 and Ser-645 by PP1 activates the enzyme. As to expression, expressed in skeletal muscle and most other cell types where glycogen is present.

It carries out the reaction [(1-&gt;4)-alpha-D-glucosyl](n) + UDP-alpha-D-glucose = [(1-&gt;4)-alpha-D-glucosyl](n+1) + UDP + H(+). The protein operates within glycan biosynthesis; glycogen biosynthesis. With respect to regulation, allosteric activation by glucose-6-phosphate. Phosphorylation reduces enzyme activity by constraining a tense conformation of the tetramer through inter-subunit interaction. Phosphorylation reduces the activity towards UDP-glucose. When in the non-phosphorylated state, glycogen synthase does not require glucose-6-phosphate as an allosteric activator; when phosphorylated it does. Its function is as follows. Glycogen synthase participates in the glycogen biosynthetic process along with glycogenin and glycogen branching enzyme. Extends the primer composed of a few glucose units formed by glycogenin by adding new glucose units to it. In this context, glycogen synthase transfers the glycosyl residue from UDP-Glc to the non-reducing end of alpha-1,4-glucan. The sequence is that of Glycogen [starch] synthase, muscle from Homo sapiens (Human).